Here is a 323-residue protein sequence, read N- to C-terminus: MRQATLYRYRLPVDAGVALRNQRLKSRDGLLVRLHEDGREGWGEIAPLPEFSHETLPEAQEAACRLLAQWQVGAAPAESPLPSVAFGLSCAQAELSGTLPQAANYRSATLCNGDPDALFQVLQSIPGEKVAKVKVGLYEAVRDGMIVNLLLEALPDLHLRLDANRSWTRAKADGFAKYVNPDWRDRILFLEEPCKTRDESRAFARDTGIAIAWDESVRDADFRVEAEPGVAAIIIKPTLTGSLQRCRQLVTQAHQAGLSAVISSSIESSLGLSQLARMAAWLTPGTPPGLDTLMLMQAQLLRAWPACTLPLWGEDTLDVVWQG.

The active-site Proton donor is Lys-134. Positions 162, 191, and 214 each coordinate Mg(2+). The active-site Proton acceptor is Lys-236.

It belongs to the mandelate racemase/muconate lactonizing enzyme family. MenC type 1 subfamily. Requires a divalent metal cation as cofactor.

It carries out the reaction (1R,6R)-6-hydroxy-2-succinyl-cyclohexa-2,4-diene-1-carboxylate = 2-succinylbenzoate + H2O. The protein operates within quinol/quinone metabolism; 1,4-dihydroxy-2-naphthoate biosynthesis; 1,4-dihydroxy-2-naphthoate from chorismate: step 4/7. It participates in quinol/quinone metabolism; menaquinone biosynthesis. Its function is as follows. Converts 2-succinyl-6-hydroxy-2,4-cyclohexadiene-1-carboxylate (SHCHC) to 2-succinylbenzoate (OSB). The chain is o-succinylbenzoate synthase from Edwardsiella ictaluri (strain 93-146).